A 161-amino-acid polypeptide reads, in one-letter code: MITVDKWFRINRADTGLCNYWPELSAGTVFKVRELVKECEDDIEPDTGIIEIELSDGKIINIYDKPITYWCLWNTESVENGEIEEVVERTNQVVQKPKADFQGERISYALAKLAAQENNDGYEGNLMQAAAEYIEWLETQISFSDRMIQQYKRLHQMFYNT.

Plays a role in the inhibition of bacterial toxin-antitoxin system by blocking the action of host Lon protease. The sequence is that of Host protease inhibitor (pin) from Enterobacteria phage T4 (Bacteriophage T4).